Consider the following 248-residue polypeptide: MAAITSWITDSGCKDHASLVSIAKLAEQAERYEDMAVAMKTIAEMGNELNNEERNLLSVAYKNVVGARRSSWRIMSSIAKKQAGTPLADQTDIYLKKVEEELTKICNDVLALLSKNLITEKIGAEAKIFYYKMMGDYYRYLAEVQEGEQNDKSTEAAEEAYQKATSLAEAELSVTHPIRLGLALNFSVFYYEIKNMPEKACSLAKAAFDAAITEVDSIKDETYKDSTLIMQLLRDNLTLWSSECETDS.

Belongs to the 14-3-3 family.

In Echinococcus granulosus (Hydatid tapeworm), this protein is 14-3-3 protein homolog 2.